The chain runs to 592 residues: Bifunctional purine biosynthesis protein ATIC (592 aa).

Position 1 is an N-acetylmethionine (methionine 1). One can recognise an MGS-like domain in the interval 1 to 146; that stretch reads MAPGHLALFS…KNHARVTVVC (146 aa). An IMP cyclohydrolase region spans residues 1-198; it reads MAPGHLALFS…ISDYFRKQYS (198 aa). IMP is bound by residues 12–14, 34–37, 64–67, 101–102, and 125–126; these read SDK, SGGT, RVKT, CN, and DI. Lysine 137 functions as the Proton donor/acceptor; for FAICAR cyclization activity in the catalytic mechanism. Lysine 199 is subject to N6-acetyllysine. Residues 199-592 are AICAR formyltransferase; that stretch reads KGISQMPLRY…AHTNLRLFHH (394 aa). Residues 207–208, histidine 267, glycine 316, aspartate 339, asparagine 431, and arginine 451 each bind 5-amino-1-(5-phospho-beta-D-ribosyl)imidazole-4-carboxamide; that span reads RY. Histidine 267 functions as the Proton acceptor; for AICAR formyltransferase activity in the catalytic mechanism. Residue isoleucine 452 coordinates (6R)-10-formyltetrahydrofolate. 5-amino-1-(5-phospho-beta-D-ribosyl)imidazole-4-carboxamide is bound at residue phenylalanine 541. Residues aspartate 546 and 565–566 each bind (6R)-10-formyltetrahydrofolate; that span reads SA. Arginine 588 is a 5-amino-1-(5-phospho-beta-D-ribosyl)imidazole-4-carboxamide binding site.

Belongs to the PurH family. As to quaternary structure, homodimer. Associates with internalized INSR complexes on Golgi/endosomal membranes. Interacts with INSR; ATIC together with PRKAA2/AMPK2 and HACD3/PTPLAD1 is proposed to be part of a signaling network regulating INSR autophosphorylation and endocytosis.

It localises to the cytoplasm. The protein resides in the cytosol. It carries out the reaction (6R)-10-formyltetrahydrofolate + 5-amino-1-(5-phospho-beta-D-ribosyl)imidazole-4-carboxamide = 5-formamido-1-(5-phospho-D-ribosyl)imidazole-4-carboxamide + (6S)-5,6,7,8-tetrahydrofolate. The enzyme catalyses 10-formyldihydrofolate + 5-amino-1-(5-phospho-beta-D-ribosyl)imidazole-4-carboxamide = 5-formamido-1-(5-phospho-D-ribosyl)imidazole-4-carboxamide + 7,8-dihydrofolate. The catalysed reaction is IMP + H2O = 5-formamido-1-(5-phospho-D-ribosyl)imidazole-4-carboxamide. It participates in purine metabolism; IMP biosynthesis via de novo pathway; 5-formamido-1-(5-phospho-D-ribosyl)imidazole-4-carboxamide from 5-amino-1-(5-phospho-D-ribosyl)imidazole-4-carboxamide (10-formyl THF route): step 1/1. Its pathway is purine metabolism; IMP biosynthesis via de novo pathway; IMP from 5-formamido-1-(5-phospho-D-ribosyl)imidazole-4-carboxamide: step 1/1. AMP and XMP inhibit AICAR formyltransferase activity. In terms of biological role, bifunctional enzyme that catalyzes the last two steps of purine biosynthesis. Acts as a transformylase that incorporates a formyl group to the AMP analog AICAR (5-amino-1-(5-phospho-beta-D-ribosyl)imidazole-4-carboxamide) to produce the intermediate formyl-AICAR (FAICAR). Can use both 10-formyldihydrofolate and 10-formyltetrahydrofolate as the formyl donor in this reaction. Also catalyzes the cyclization of FAICAR to inosine monophosphate (IMP). Promotes insulin receptor/INSR autophosphorylation and is involved in INSR internalization. In Pongo abelii (Sumatran orangutan), this protein is Bifunctional purine biosynthesis protein ATIC (ATIC).